The primary structure comprises 291 residues: RPE-retinal G protein-coupled receptor (291 aa).

The Extracellular segment spans residues 1-15; sequence MAETSALPTGFGELE. Residues 16–36 form a helical membrane-spanning segment; it reads VLAVGMVLLVEALSGLSLNTL. Residues 37–52 lie on the Cytoplasmic side of the membrane; sequence TIFSFCKTPELRTPCH. Residues 53–73 form a helical membrane-spanning segment; it reads LLVLSLALADSGISLNALVAA. Residues 74 to 91 are Extracellular-facing; sequence TSSLLRRWPYGSDGCQAH. A disulfide bond links Cys-88 and Cys-162. The helical transmembrane segment at 92–112 threads the bilayer; it reads GFQGFVTALASICSSAAIAWG. The Cytoplasmic segment spans residues 113 to 130; that stretch reads RYHHYCTRSQLAWNSAVS. Residues 131-151 traverse the membrane as a helical segment; the sequence is LVLFVWLSSAFWAALPLLGWG. At 152-175 the chain is on the extracellular side; it reads HYDYEPLGTCCTLDYSKGDRNFTS. A glycan (N-linked (GlcNAc...) asparagine) is linked at Asn-172. A helical transmembrane segment spans residues 176–196; that stretch reads FLFTMSFFNFAMPLFITITSY. Over 197 to 219 the chain is Cytoplasmic; the sequence is SLMEQKLGKSGHLQVNTTLPART. A helical transmembrane segment spans residues 220–240; it reads LLLGWGPYAILYLYAVIADVT. Residues 241 to 247 lie on the Extracellular side of the membrane; it reads SISPKLQ. A helical membrane pass occupies residues 248-268; it reads MVPALIAKMVPTINAINYALG. The residue at position 255 (Lys-255) is an N6-(retinylidene)lysine. Topologically, residues 269–291 are cytoplasmic; the sequence is NEMVCRGIWQCLSPQKREKDRTK.

This sequence belongs to the G-protein coupled receptor 1 family. Opsin subfamily. Covalently binds all-trans- and 11-cis-retinal. Preferentially expressed at high levels in the retinal pigment epithelium (RPE) and Mueller cells of the neural retina.

The protein localises to the membrane. Its function is as follows. Receptor for all-trans- and 11-cis-retinal. Binds preferentially to the former and may catalyze the isomerization of the chromophore by a retinochrome-like mechanism. The sequence is that of RPE-retinal G protein-coupled receptor (RGR) from Homo sapiens (Human).